A 447-amino-acid chain; its full sequence is MYIRTFGCQMNEYDSDKMADVLRADQGLELTDNPEDADVILFNTCSVREKAQEKVFSDLGRVQHLKKQNPNLVIGVGGCVASQEGEAIVKRAPYVDVVFGPQTLHRLPDLIKRRRAQGVSQVDISFPEIEKFDALPPPRVDGATAFVSIMEGCSKYCSFCVVPYTRGEEVSRPFDDVLLEVADLADQGVKEVTLLGQNVNAYRGAMGDSGEIADFAMLLEYVHEIPGIERIRYTTSHPKEMTQRMVDAYARLPKLVSFLHLPVQAGSDRVLAAMKRGYTALEFKSVVRRLRAARPSLTLSSDFIVGFPGETEEDFQKTMKLIEDVGFDTSFSFVYSRRPGTPAADLHDDTPQDVKLRRLQQLQALINQQAAAIAQGMIGTRQRVLVEGPSRRDPNELMGRTENNRIVNFPGVPRLIGHMVDVVVTHAHTNSLRGRVAGIERDTSGAE.

The MTTase N-terminal domain maps to 1–116; it reads MYIRTFGCQM…LPDLIKRRRA (116 aa). [4Fe-4S] cluster contacts are provided by Cys8, Cys45, Cys79, Cys153, Cys157, and Cys160. Positions 139 to 372 constitute a Radical SAM core domain; it reads RVDGATAFVS…QALINQQAAA (234 aa). A TRAM domain is found at 375 to 438; the sequence is QGMIGTRQRV…TNSLRGRVAG (64 aa).

This sequence belongs to the methylthiotransferase family. MiaB subfamily. Monomer. [4Fe-4S] cluster is required as a cofactor.

The protein resides in the cytoplasm. It catalyses the reaction N(6)-dimethylallyladenosine(37) in tRNA + (sulfur carrier)-SH + AH2 + 2 S-adenosyl-L-methionine = 2-methylsulfanyl-N(6)-dimethylallyladenosine(37) in tRNA + (sulfur carrier)-H + 5'-deoxyadenosine + L-methionine + A + S-adenosyl-L-homocysteine + 2 H(+). Functionally, catalyzes the methylthiolation of N6-(dimethylallyl)adenosine (i(6)A), leading to the formation of 2-methylthio-N6-(dimethylallyl)adenosine (ms(2)i(6)A) at position 37 in tRNAs that read codons beginning with uridine. The chain is tRNA-2-methylthio-N(6)-dimethylallyladenosine synthase from Bordetella pertussis (strain Tohama I / ATCC BAA-589 / NCTC 13251).